A 210-amino-acid polypeptide reads, in one-letter code: Large ribosomal subunit protein uL3 (210 aa).

The segment at 136 to 156 (THGTEKAHRSGGSIGNNTEPG) is disordered.

The protein belongs to the universal ribosomal protein uL3 family. Part of the 50S ribosomal subunit. Forms a cluster with proteins L14 and L19.

Functionally, one of the primary rRNA binding proteins, it binds directly near the 3'-end of the 23S rRNA, where it nucleates assembly of the 50S subunit. This Solidesulfovibrio magneticus (strain ATCC 700980 / DSM 13731 / RS-1) (Desulfovibrio magneticus) protein is Large ribosomal subunit protein uL3.